A 179-amino-acid chain; its full sequence is Crossover junction endodeoxyribonuclease RuvC (179 aa).

Catalysis depends on residues Asp-7, Glu-67, and Asp-140. The Mg(2+) site is built by Asp-7, Glu-67, and Asp-140.

Belongs to the RuvC family. As to quaternary structure, homodimer which binds Holliday junction (HJ) DNA. The HJ becomes 2-fold symmetrical on binding to RuvC with unstacked arms; it has a different conformation from HJ DNA in complex with RuvA. In the full resolvosome a probable DNA-RuvA(4)-RuvB(12)-RuvC(2) complex forms which resolves the HJ. Mg(2+) serves as cofactor.

It localises to the cytoplasm. The catalysed reaction is Endonucleolytic cleavage at a junction such as a reciprocal single-stranded crossover between two homologous DNA duplexes (Holliday junction).. The RuvA-RuvB-RuvC complex processes Holliday junction (HJ) DNA during genetic recombination and DNA repair. Endonuclease that resolves HJ intermediates. Cleaves cruciform DNA by making single-stranded nicks across the HJ at symmetrical positions within the homologous arms, yielding a 5'-phosphate and a 3'-hydroxyl group; requires a central core of homology in the junction. The consensus cleavage sequence is 5'-(A/T)TT(C/G)-3'. Cleavage occurs on the 3'-side of the TT dinucleotide at the point of strand exchange. HJ branch migration catalyzed by RuvA-RuvB allows RuvC to scan DNA until it finds its consensus sequence, where it cleaves and resolves the cruciform DNA. The sequence is that of Crossover junction endodeoxyribonuclease RuvC from Salinibacter ruber (strain DSM 13855 / M31).